Consider the following 143-residue polypeptide: Large ribosomal subunit protein uL11 (143 aa).

This sequence belongs to the universal ribosomal protein uL11 family. In terms of assembly, part of the ribosomal stalk of the 50S ribosomal subunit. Interacts with L10 and the large rRNA to form the base of the stalk. L10 forms an elongated spine to which L12 dimers bind in a sequential fashion forming a multimeric L10(L12)X complex. One or more lysine residues are methylated.

Functionally, forms part of the ribosomal stalk which helps the ribosome interact with GTP-bound translation factors. This Rhizobium etli (strain CIAT 652) protein is Large ribosomal subunit protein uL11.